Here is a 79-residue protein sequence, read N- to C-terminus: Sec-independent protein translocase protein TatA (79 aa).

A helical membrane pass occupies residues 1-21 (MGGFTSIWHWVIVLLVIVLLF). The disordered stretch occupies residues 48–79 (EEEAKNEPKTLDAQVTQAKVHESSEIKNKQEG). Positions 66–79 (KVHESSEIKNKQEG) are enriched in basic and acidic residues.

Belongs to the TatA/E family. The Tat system comprises two distinct complexes: a TatABC complex, containing multiple copies of TatA, TatB and TatC subunits, and a separate TatA complex, containing only TatA subunits. Substrates initially bind to the TatABC complex, which probably triggers association of the separate TatA complex to form the active translocon.

The protein localises to the cell inner membrane. Part of the twin-arginine translocation (Tat) system that transports large folded proteins containing a characteristic twin-arginine motif in their signal peptide across membranes. TatA could form the protein-conducting channel of the Tat system. This is Sec-independent protein translocase protein TatA from Helicobacter acinonychis (strain Sheeba).